The primary structure comprises 400 residues: Acetylornithine aminotransferase (400 aa).

Residues 102–103 (GA) and Phe135 each bind pyridoxal 5'-phosphate. Arg138 serves as a coordination point for N(2)-acetyl-L-ornithine. 220–223 (DEVQ) lines the pyridoxal 5'-phosphate pocket. An N6-(pyridoxal phosphate)lysine modification is found at Lys249. Residue Ser276 participates in N(2)-acetyl-L-ornithine binding. Thr277 contacts pyridoxal 5'-phosphate.

The protein belongs to the class-III pyridoxal-phosphate-dependent aminotransferase family. ArgD subfamily. In terms of assembly, homodimer. It depends on pyridoxal 5'-phosphate as a cofactor.

It localises to the cytoplasm. The enzyme catalyses N(2)-acetyl-L-ornithine + 2-oxoglutarate = N-acetyl-L-glutamate 5-semialdehyde + L-glutamate. Its pathway is amino-acid biosynthesis; L-arginine biosynthesis; N(2)-acetyl-L-ornithine from L-glutamate: step 4/4. This chain is Acetylornithine aminotransferase, found in Gloeobacter violaceus (strain ATCC 29082 / PCC 7421).